Reading from the N-terminus, the 59-residue chain is Large ribosomal subunit protein uL30 (59 aa).

This sequence belongs to the universal ribosomal protein uL30 family. In terms of assembly, part of the 50S ribosomal subunit.

In Ruminiclostridium cellulolyticum (strain ATCC 35319 / DSM 5812 / JCM 6584 / H10) (Clostridium cellulolyticum), this protein is Large ribosomal subunit protein uL30.